The sequence spans 587 residues: MAINLFKVSNFYTMRSYVSPHVPVPNVNLQSVSCSAKAELPHLRPVIKRRSANYPPTIWTYNFVQSLNNHNADVLYKEKARKLEEEVRRLINNESQEMLTTLELIDGIQRLGLAYLFEKDIKGALDRFVSMGGCHVLPRKSLHAIALSFRLLRQHGYEVYQDDFKDFMDQKGELLKCFKKDVQGILSFYEASFCNLEGEDLLEKAKTETKVYLNDLQRNSKSDTVESISHALELPLCRRMVMLEARWYIEAYNKREDSNYTLLELAKLNFNMAQSILQRDLKDMSRWWNNLGLANKLSFSRDRLMECFFWTIGMAFEPQFSSCRKGLTKVTSLITTIDDVYDVYGTLDELEVFTDAVERWDVNAVRDLPNCMQLSFLALYNTINEMAYETLKEQGEHIIPYLTKAWADLCKAFLQEARWSHSKCIPSFDDYVENGWRSASGNVILVHAYFLLGHNSKQALDSLLNYHDILRWPSVVFRLCNDLATSSDELNRGETANSISCYMFENRVSEEQAREQINKLIDKAWTKMNEYHIGATHFGEPFIEAAINVARIPQCIYRHGDDHGAPDSRSKERVWSLIIESISLVDS.

The Mg(2+) site is built by aspartate 338, aspartate 342, and glutamate 489. The short motif at 338–342 (DDVYD) is the DDXXD motif element.

This sequence belongs to the terpene synthase family. It depends on Mg(2+) as a cofactor.

In terms of biological role, probable sesquiterpene synthase. The protein is Probable terpene synthase 12 (TPS12) of Ricinus communis (Castor bean).